The sequence spans 58 residues: Large ribosomal subunit protein uL30 (58 aa).

Belongs to the universal ribosomal protein uL30 family. Part of the 50S ribosomal subunit.

In Psychromonas ingrahamii (strain DSM 17664 / CCUG 51855 / 37), this protein is Large ribosomal subunit protein uL30.